The chain runs to 147 residues: Ubiquitin-conjugating enzyme E2-17 kDa (147 aa).

Positions Met-1–Met-147 constitute a UBC core domain. Residue Cys-85 is the Glycyl thioester intermediate of the active site.

It belongs to the ubiquitin-conjugating enzyme family.

It carries out the reaction S-ubiquitinyl-[E1 ubiquitin-activating enzyme]-L-cysteine + [E2 ubiquitin-conjugating enzyme]-L-cysteine = [E1 ubiquitin-activating enzyme]-L-cysteine + S-ubiquitinyl-[E2 ubiquitin-conjugating enzyme]-L-cysteine.. The protein operates within protein modification; protein ubiquitination. In terms of biological role, catalyzes the covalent attachment of ubiquitin to other proteins. Mediates the selective degradation of short-lived and abnormal proteins. Required for proper telomere behavior during cell divisions and possibly for ubiquitination of proteins involved in postmeiotic stages of spermatogenesis. Deletion mutations are lethal in homozygotes. This is Ubiquitin-conjugating enzyme E2-17 kDa (eff) from Drosophila melanogaster (Fruit fly).